Consider the following 117-residue polypeptide: Immunoglobulin lambda variable 1-47 (117 aa).

The signal sequence occupies residues 1 to 19; that stretch reads MAGFPLLLTLLTHCAGSWA. Gln20 is modified (pyrrolidone carboxylic acid). The framework-1 stretch occupies residues 20–44; that stretch reads QSVLTQPPSASGTPGQRVTISCSGS. Positions 20–117 constitute an Ig-like domain; sequence QSVLTQPPSA…CAAWDDSLSG (98 aa). An intrachain disulfide couples Cys41 to Cys108. The interval 45–52 is complementarity-determining-1; the sequence is SSNIGSNY. The framework-2 stretch occupies residues 53–69; sequence VYWYQQLPGTAPKLLIY. A complementarity-determining-2 region spans residues 70-72; it reads SNN. A framework-3 region spans residues 73-108; the sequence is QRPSGVPDRFSGSKSGTSASLAISGLRSEDEADYYC. Residues 109–117 form a complementarity-determining-3 region; that stretch reads AAWDDSLSG.

Immunoglobulins are composed of two identical heavy chains and two identical light chains; disulfide-linked.

It is found in the secreted. It localises to the cell membrane. Functionally, v region of the variable domain of immunoglobulin light chains that participates in the antigen recognition. Immunoglobulins, also known as antibodies, are membrane-bound or secreted glycoproteins produced by B lymphocytes. In the recognition phase of humoral immunity, the membrane-bound immunoglobulins serve as receptors which, upon binding of a specific antigen, trigger the clonal expansion and differentiation of B lymphocytes into immunoglobulins-secreting plasma cells. Secreted immunoglobulins mediate the effector phase of humoral immunity, which results in the elimination of bound antigens. The antigen binding site is formed by the variable domain of one heavy chain, together with that of its associated light chain. Thus, each immunoglobulin has two antigen binding sites with remarkable affinity for a particular antigen. The variable domains are assembled by a process called V-(D)-J rearrangement and can then be subjected to somatic hypermutations which, after exposure to antigen and selection, allow affinity maturation for a particular antigen. The polypeptide is Immunoglobulin lambda variable 1-47 (Homo sapiens (Human)).